The primary structure comprises 265 residues: Transcription factor BHLH062 (265 aa).

Residues 1–26 (MVPRDRVNAAAAGGGGEGRLVQSGIV) form a disordered region. A basic motif; degenerate region spans residues 35–48 (PKRIHKSEREKLKR). The 51-residue stretch at 35–85 (PKRIHKSEREKLKRDKQNDLFNELGNLLEPDRQNNGKACVLGETTRILKDL) folds into the bHLH domain. A helix-loop-helix motif region spans residues 49–85 (DKQNDLFNELGNLLEPDRQNNGKACVLGETTRILKDL). Residues 75–130 (LGETTRILKDLLSQVESLRKENSSLKNESHYVALERNELHDDNSMLRTEILELQNE) adopt a coiled-coil conformation. The interval 200-265 (ESATSEDSEP…TNEEDRIGRS (66 aa)) is disordered. A compositionally biased stretch (basic and acidic residues) spans 210–220 (SQEHGISDHVT). A compositionally biased stretch (polar residues) spans 245-256 (QDQQCSSGTSGT).

Belongs to the bHLH protein family. In terms of assembly, interacts with TIFY11A/JAZ9.

Its subcellular location is the nucleus. Its function is as follows. Transcription factor that plays a positive role in salt stress tolerance. Interacts with TIFY11A/JAZ9 and binds to the promoter of some potassium ion transporter genes to regulate potassium homeostasis during salt stress. In Oryza sativa subsp. japonica (Rice), this protein is Transcription factor BHLH062.